Here is an 899-residue protein sequence, read N- to C-terminus: Pre-mRNA-splicing factor 6 (899 aa).

A disordered region spans residues M1–D65. Positions T28–L51 are enriched in basic and acidic residues. 13 HAT repeats span residues E221–K253, R255–S287, V289–S318, T319–D350, A352–Y381, N383–P414, P493–S525, N545–Q578, L608–Y645, L648–S680, G682–I714, G751–H783, and A819–R851.

In terms of assembly, component of the U4/U6-U5 tri-snRNP complex composed of the U4, U6 and U5 snRNAs and at least PRP3, PRP4, PRP6, PRP8, PRP18, PRP31, PRP38, SNU13, SNU23, SNU66, SNU114, SPP381, SMB1, SMD1, SMD2, SMD3, SMX2, SMX3, LSM2, LSM3, LSM4, LSM5, LSM6, LSM7, LSM8, BRR2 and DIB1.

It is found in the nucleus. Its function is as follows. Participates in pre-mRNA splicing. Part of the U4/U5/U6 tri-snRNP complex, one of the building blocks of the spliceosome. This chain is Pre-mRNA-splicing factor 6 (PRP6), found in Saccharomyces cerevisiae (strain ATCC 204508 / S288c) (Baker's yeast).